The following is a 296-amino-acid chain: Ribosomal RNA small subunit methyltransferase A (296 aa).

S-adenosyl-L-methionine-binding residues include asparagine 32, leucine 34, glycine 59, glutamate 80, aspartate 105, and asparagine 130.

It belongs to the class I-like SAM-binding methyltransferase superfamily. rRNA adenine N(6)-methyltransferase family. RsmA subfamily.

Its subcellular location is the cytoplasm. The catalysed reaction is adenosine(1518)/adenosine(1519) in 16S rRNA + 4 S-adenosyl-L-methionine = N(6)-dimethyladenosine(1518)/N(6)-dimethyladenosine(1519) in 16S rRNA + 4 S-adenosyl-L-homocysteine + 4 H(+). Specifically dimethylates two adjacent adenosines (A1518 and A1519) in the loop of a conserved hairpin near the 3'-end of 16S rRNA in the 30S particle. May play a critical role in biogenesis of 30S subunits. The protein is Ribosomal RNA small subunit methyltransferase A of Lactiplantibacillus plantarum (strain ATCC BAA-793 / NCIMB 8826 / WCFS1) (Lactobacillus plantarum).